Here is a 573-residue protein sequence, read N- to C-terminus: Probable D-xylulose kinase A (573 aa).

Substrate-binding residues include His-97, Arg-168, Asp-284, and Asn-285. ATP-binding positions include Trp-366, 471–472 (GG), and Asn-475.

Belongs to the FGGY kinase family.

The protein localises to the cytoplasm. It carries out the reaction D-xylulose + ATP = D-xylulose 5-phosphate + ADP + H(+). In terms of biological role, highly specific D-xylulose kinase which participates in the catabolism of xylose. Xylose is a major component of hemicelluloses such as xylan. Most fungi utilize D-xylose via three enzymatic reactions, xylose reductase (XR), xylitol dehydrogenase (XDH), and xylulokinase, to form xylulose 5-phosphate, which enters pentose phosphate pathway. This chain is Probable D-xylulose kinase A (xkiA), found in Aspergillus clavatus (strain ATCC 1007 / CBS 513.65 / DSM 816 / NCTC 3887 / NRRL 1 / QM 1276 / 107).